Reading from the N-terminus, the 604-residue chain is Proline--tRNA ligase (604 aa).

This sequence belongs to the class-II aminoacyl-tRNA synthetase family. ProS type 1 subfamily. As to quaternary structure, homodimer.

It is found in the cytoplasm. It catalyses the reaction tRNA(Pro) + L-proline + ATP = L-prolyl-tRNA(Pro) + AMP + diphosphate. Its function is as follows. Catalyzes the attachment of proline to tRNA(Pro) in a two-step reaction: proline is first activated by ATP to form Pro-AMP and then transferred to the acceptor end of tRNA(Pro). As ProRS can inadvertently accommodate and process non-cognate amino acids such as alanine and cysteine, to avoid such errors it has two additional distinct editing activities against alanine. One activity is designated as 'pretransfer' editing and involves the tRNA(Pro)-independent hydrolysis of activated Ala-AMP. The other activity is designated 'posttransfer' editing and involves deacylation of mischarged Ala-tRNA(Pro). The misacylated Cys-tRNA(Pro) is not edited by ProRS. In Nostoc punctiforme (strain ATCC 29133 / PCC 73102), this protein is Proline--tRNA ligase.